The primary structure comprises 461 residues: Chromosomal replication initiator protein DnaA (461 aa).

The interval 1 to 87 (MAVSLWQQCI…IGSRPSAKPV (87 aa)) is domain I, interacts with DnaA modulators. The domain II stretch occupies residues 87-124 (VVQATAAVRTSRPVTREVTKPSFNTPHAEPMANANHRS). The tract at residues 99–125 (PVTREVTKPSFNTPHAEPMANANHRSN) is disordered. A domain III, AAA+ region region spans residues 125-341 (NINPTYQFDN…GALNRVIANA (217 aa)). The ATP site is built by Gly-169, Gly-171, Lys-172, and Thr-173. Residues 342-461 (NFTGRPITID…YANLIRTLSS (120 aa)) are domain IV, binds dsDNA.

Belongs to the DnaA family. Oligomerizes as a right-handed, spiral filament on DNA at oriC.

Its subcellular location is the cytoplasm. In terms of biological role, plays an essential role in the initiation and regulation of chromosomal replication. ATP-DnaA binds to the origin of replication (oriC) to initiate formation of the DNA replication initiation complex once per cell cycle. Binds the DnaA box (a 9 base pair repeat at the origin) and separates the double-stranded (ds)DNA. Forms a right-handed helical filament on oriC DNA; dsDNA binds to the exterior of the filament while single-stranded (ss)DNA is stabiized in the filament's interior. The ATP-DnaA-oriC complex binds and stabilizes one strand of the AT-rich DNA unwinding element (DUE), permitting loading of DNA polymerase. After initiation quickly degrades to an ADP-DnaA complex that is not apt for DNA replication. Binds acidic phospholipids. The protein is Chromosomal replication initiator protein DnaA of Shewanella pealeana (strain ATCC 700345 / ANG-SQ1).